Reading from the N-terminus, the 315-residue chain is Probable mannose-6-phosphate isomerase GmuF (315 aa).

Positions 95, 97, 115, and 172 each coordinate Zn(2+). R192 is an active-site residue.

The protein belongs to the mannose-6-phosphate isomerase type 1 family. It depends on Zn(2+) as a cofactor.

It catalyses the reaction D-mannose 6-phosphate = D-fructose 6-phosphate. Functionally, seems to be involved in the degradation of glucomannan. In Bacillus subtilis (strain 168), this protein is Probable mannose-6-phosphate isomerase GmuF (gmuF).